A 207-amino-acid polypeptide reads, in one-letter code: Small ribosomal subunit protein uS4 (207 aa).

One can recognise an S4 RNA-binding domain in the interval 97–160 (SRLDNVVYRM…KKQARIVEAL (64 aa)).

This sequence belongs to the universal ribosomal protein uS4 family. Part of the 30S ribosomal subunit. Contacts protein S5. The interaction surface between S4 and S5 is involved in control of translational fidelity.

One of the primary rRNA binding proteins, it binds directly to 16S rRNA where it nucleates assembly of the body of the 30S subunit. Its function is as follows. With S5 and S12 plays an important role in translational accuracy. This is Small ribosomal subunit protein uS4 from Burkholderia pseudomallei (strain 1106a).